A 29-amino-acid polypeptide reads, in one-letter code: Acidic phospholipase A2 Omo-E6 (29 aa).

Ca(2+)-binding residues include Y27 and G29.

It depends on Ca(2+) as a cofactor. Expressed by the venom gland.

Its subcellular location is the secreted. It catalyses the reaction a 1,2-diacyl-sn-glycero-3-phosphocholine + H2O = a 1-acyl-sn-glycero-3-phosphocholine + a fatty acid + H(+). Snake venom phospholipase A2 (PLA2) that inhibits the ADP- and collagen-induced human platelet aggregation. Exhibits strong hydrolytic activities and prefers the anionic micelles (dPPC with deoxycholate) to the zwitterionic micelles (dPPC with Triton X-100). PLA2 catalyzes the calcium-dependent hydrolysis of the 2-acyl groups in 3-sn-phosphoglycerides. The sequence is that of Acidic phospholipase A2 Omo-E6 from Ovophis monticola (Chinese mountain pitviper).